Reading from the N-terminus, the 217-residue chain is Large ribosomal subunit protein uL1 (217 aa).

Position 2 is an N-acetylserine (Ser-2). Tyr-11 is modified (phosphotyrosine). N6-acetyllysine occurs at positions 91 and 106. Lys-118 carries the post-translational modification N6-acetyllysine; alternate. A Glycyl lysine isopeptide (Lys-Gly) (interchain with G-Cter in SUMO1); alternate cross-link involves residue Lys-118. Lys-118 participates in a covalent cross-link: Glycyl lysine isopeptide (Lys-Gly) (interchain with G-Cter in SUMO2); alternate. A Glycyl lysine isopeptide (Lys-Gly) (interchain with G-Cter in SUMO2) cross-link involves residue Lys-161.

This sequence belongs to the universal ribosomal protein uL1 family. As to quaternary structure, component of the large ribosomal subunit.

The protein resides in the cytoplasm. In terms of biological role, component of the large ribosomal subunit. The ribosome is a large ribonucleoprotein complex responsible for the synthesis of proteins in the cell. In Bos taurus (Bovine), this protein is Large ribosomal subunit protein uL1 (RPL10A).